The following is a 215-amino-acid chain: Histidine biosynthesis bifunctional protein HisIE (215 aa).

The segment at 1 to 118 is phosphoribosyl-AMP cyclohydrolase; sequence MTKSISIEHL…YKNDVALLQI (118 aa). The tract at residues 119–215 is phosphoribosyl-ATP pyrophosphohydrolase; the sequence is IPQVSAKIKE…HVEKEGQQRE (97 aa).

In the N-terminal section; belongs to the PRA-CH family. This sequence in the C-terminal section; belongs to the PRA-PH family.

The protein resides in the cytoplasm. It catalyses the reaction 1-(5-phospho-beta-D-ribosyl)-ATP + H2O = 1-(5-phospho-beta-D-ribosyl)-5'-AMP + diphosphate + H(+). The enzyme catalyses 1-(5-phospho-beta-D-ribosyl)-5'-AMP + H2O = 1-(5-phospho-beta-D-ribosyl)-5-[(5-phospho-beta-D-ribosylamino)methylideneamino]imidazole-4-carboxamide. Its pathway is amino-acid biosynthesis; L-histidine biosynthesis; L-histidine from 5-phospho-alpha-D-ribose 1-diphosphate: step 2/9. It functions in the pathway amino-acid biosynthesis; L-histidine biosynthesis; L-histidine from 5-phospho-alpha-D-ribose 1-diphosphate: step 3/9. The polypeptide is Histidine biosynthesis bifunctional protein HisIE (Oceanobacillus iheyensis (strain DSM 14371 / CIP 107618 / JCM 11309 / KCTC 3954 / HTE831)).